We begin with the raw amino-acid sequence, 344 residues long: Heptahelical transmembrane protein 3 (344 aa).

The Cytoplasmic portion of the chain corresponds to 1-76 (MKRRRSAKKS…AFSWHNETLN (76 aa)). The chain crosses the membrane as a helical span at residues 77–97 (IWTHLIGFGIFLWMTVVSCLE). Residues 98 to 147 (TTEISLAGVFNGMAGVRICLSSNQTLLHDSNVTHHISCLTSQGEAIPKWP) lie on the Extracellular side of the membrane. A helical transmembrane segment spans residues 148 to 168 (WLVYLVGAMGCLICSSVSHLL). Residues 169–184 (ACHSKRFNVFFWRLDY) are Cytoplasmic-facing. The chain crosses the membrane as a helical span at residues 185–205 (AGISLMIVASFFAPIYYAFSC). Topologically, residues 206–210 (HPNFR) are extracellular. A helical membrane pass occupies residues 211-231 (LLYLSSISILGLLAIITLLSP). Topologically, residues 232–244 (ALSTPRFRPFRAN) are cytoplasmic. A helical transmembrane segment spans residues 245–265 (LFLAMGSSAVIPATHVLCLYW). Residues 266–269 (DHPN) are Extracellular-facing. A helical membrane pass occupies residues 270 to 290 (VFIALGYEIATALSYFVGATF). The Cytoplasmic portion of the chain corresponds to 291 to 312 (YVSRVPERWKPGAFDMAGHSHQ). A helical transmembrane segment spans residues 313–333 (IFHVFVVMGALAHCVTTLLII). At 334 to 344 (DFSRASPSCGF) the chain is on the extracellular side.

Belongs to the ADIPOR family. As to expression, expressed in roots and flowers.

The protein resides in the membrane. Functionally, may play a role in abiotic stress response. This Arabidopsis thaliana (Mouse-ear cress) protein is Heptahelical transmembrane protein 3 (HHP3).